Here is a 119-residue protein sequence, read N- to C-terminus: gSG7 salivary protein (119 aa).

2 disulfide bridges follow: Cys-58-Cys-113 and Cys-81-Cys-91.

The protein localises to the secreted. The activity is increased in the presence of host properdin (CFP). In terms of biological role, salivary protein that inhibits the alternative pathway of complement system activation in the host while having no inhibitory effect on the classical pathway. Inhibits activity of activated host C3-convertase complex C3bBb (C3-CFB). Enhances accumulation of C3bBb on immobilized properdin. This chain is gSG7 salivary protein, found in Anopheles freeborni (Western malaria mosquito).